Here is a 289-residue protein sequence, read N- to C-terminus: Thymidylate synthase (289 aa).

Residues R21 and 150–151 (RR) contribute to the dUMP site. The active-site Nucleophile is C170. DUMP contacts are provided by residues 191 to 194 (RSAD), N202, and 232 to 234 (HIY). D194 is a binding site for (6R)-5,10-methylene-5,6,7,8-tetrahydrofolate. A288 contacts (6R)-5,10-methylene-5,6,7,8-tetrahydrofolate.

It belongs to the thymidylate synthase family. Bacterial-type ThyA subfamily. As to quaternary structure, homodimer.

It is found in the cytoplasm. It carries out the reaction dUMP + (6R)-5,10-methylene-5,6,7,8-tetrahydrofolate = 7,8-dihydrofolate + dTMP. Its pathway is pyrimidine metabolism; dTTP biosynthesis. In terms of biological role, catalyzes the reductive methylation of 2'-deoxyuridine-5'-monophosphate (dUMP) to 2'-deoxythymidine-5'-monophosphate (dTMP) while utilizing 5,10-methylenetetrahydrofolate (mTHF) as the methyl donor and reductant in the reaction, yielding dihydrofolate (DHF) as a by-product. This enzymatic reaction provides an intracellular de novo source of dTMP, an essential precursor for DNA biosynthesis. This Malacoplasma penetrans (strain HF-2) (Mycoplasma penetrans) protein is Thymidylate synthase.